The primary structure comprises 208 residues: Ubiquitin-conjugating enzyme E2 S (208 aa).

The 147-residue stretch at 14–160 folds into the UBC core domain; that stretch reads QTIRQVMREL…ARMMTEIHAQ (147 aa). Catalysis depends on cysteine 98, which acts as the Glycyl thioester intermediate. Positions 159–208 are disordered; it reads AQPAKCASTTSDAKDDDGPSTKKHAGLDKKLQDKKKEKLLKEKKRMLKRL. Positions 170-198 are enriched in basic and acidic residues; it reads DAKDDDGPSTKKHAGLDKKLQDKKKEKLL. Residues 199–208 show a composition bias toward basic residues; the sequence is KEKKRMLKRL.

The protein belongs to the ubiquitin-conjugating enzyme family.

The enzyme catalyses S-ubiquitinyl-[E1 ubiquitin-activating enzyme]-L-cysteine + [E2 ubiquitin-conjugating enzyme]-L-cysteine = [E1 ubiquitin-activating enzyme]-L-cysteine + S-ubiquitinyl-[E2 ubiquitin-conjugating enzyme]-L-cysteine.. It functions in the pathway protein modification; protein ubiquitination. Functionally, catalyzes the covalent attachment of ubiquitin to other proteins. Acts as an essential factor of the anaphase promoting complex/cyclosome (APC/C), a cell cycle-regulated ubiquitin ligase that controls progression through mitosis. Acts by specifically elongating polyubiquitin chains initiated by the E2 enzyme vih/UbcH10 on APC/C substrates, enhancing the degradation of APC/C substrates by the proteasome and promoting mitotic exit. This is Ubiquitin-conjugating enzyme E2 S from Drosophila willistoni (Fruit fly).